We begin with the raw amino-acid sequence, 380 residues long: MDLQLKQWRSQQQNESEEQGSAATKISNFFFDQIQSQTATSAAAAPLPLFVPEPTSSSSFSCFSPDSSNSSSSSRFLKMGNFFSWAQWQELELQALIYRYMLAGASVPQELLLPIKKSLLHQSPMHFLHHPLQHSFPHHQPSWYWGRGAMDPEPGRCKRTDGKKWRCSRDVVAGHKYCDRHIHRGRNRSRKPVETATTTITTTATTTASSFVLGEELGHGPNNNHFFSSGSSQPLHLSHQQSCSSEMKQESNNNKRPYEANSGFSNGRSDDGHILRHFFDDWPRSSDSTSSPMSSSTCHLSISMPGNNTSSDVSLKLSTGNEEEEENMRNNNNEREQMNWWSNGGNHHNNMGGPLAEALRSASSTSSVLHQMGISTQVFH.

The disordered stretch occupies residues M1–S21. The QLQ domain occupies F82 to K117. One can recognise a WRC domain in the interval D151–T195. Short sequence motifs (bipartite nuclear localization signal) lie at residues R156 to R166 and R184 to K191. Disordered regions lie at residues N222–D270 and R284–N330. Low complexity-rich tracts occupy residues S228 to S245 and S285 to S296. The segment covering T297–G320 has biased composition (polar residues).

This sequence belongs to the GRF family. Strongly expressed in actively growing and developing tissues, such as roots, upper stems, and shoot tips containing the shoot apical meristem (SAM) and flower buds. Also expressed in mature flowers, but weakly expressed in mature stems and leaves.

It localises to the nucleus. In terms of biological role, transcription activator that plays a role in the regulation of cell expansion in leaf and cotyledons tissues. Component of a network formed by miR396, the GRFs and their interacting factors (GIFs) acting in the regulation of meristem function, at least partially through the control of cell proliferation. This is Growth-regulating factor 4 (GRF4) from Arabidopsis thaliana (Mouse-ear cress).